The following is a 380-amino-acid chain: MREESRSRKRKHIPVDIEEVEVRSKYFKKNERTVELVKENKINKDLQNYGGVNIDWIKALKPIEYFEWIESRTCDDPRTWGRPITKEEMINDSGAKVPESFLPIYNRVRLMRSKVKTPVDAMGCSMIPVLVSNKCGIPSEKVDPKNFRLQFLIGTMLSAQTRDERMAQAALNITEYCLNTLKIAEGITLDGLLKIDEPVLANLIRCVSFYTRKANFIKRTAQLLVDNFDSDIPYDIEGILSLPGVGPKMGYLTLQKGWGLIAGICVDVHVHRLCKMWNWVDPIKCKTAEHTRKELQVWLPHSLWYEINTVLVGFGQLICMARGKRCDLCLANDVCNARNEKLIESSKFHQLEDKEDIEKVYSHWLDTVTNGITTERHKKK.

The Nuclear localization signal motif lies at 8 to 12 (RKRKH). The segment at 15 to 40 (VDIEEVEVRSKYFKKNERTVELVKEN) is interaction with MLH1. Lysine 194 is covalently cross-linked (Glycyl lysine isopeptide (Lys-Gly) (interchain with G-Cter in SUMO)). Residues 228–252 (FDSDIPYDIEGILSLPGVGPKMGYL) form the HhH domain. The active-site Nucleophile; for N-glycosylase activity is lysine 248. Residues cysteine 319, cysteine 326, cysteine 329, and cysteine 335 each coordinate [4Fe-4S] cluster. A Nuclear localization signal motif is present at residues 376–380 (RHKKK).

This sequence belongs to the Nth/MutY family. In terms of assembly, interacts with MLH1. Requires [4Fe-4S] cluster as cofactor. In terms of processing, monosumoylated.

The protein localises to the nucleus. It carries out the reaction 2'-deoxyribonucleotide-(2'-deoxyribose 5'-phosphate)-2'-deoxyribonucleotide-DNA = a 3'-end 2'-deoxyribonucleotide-(2,3-dehydro-2,3-deoxyribose 5'-phosphate)-DNA + a 5'-end 5'-phospho-2'-deoxyribonucleoside-DNA + H(+). Functionally, bifunctional DNA N-glycosylase with associated apurinic/apyrimidinic (AP) lyase function that catalyzes the first step in base excision repair (BER), the primary repair pathway for the repair of oxidative DNA damage. The DNA N-glycosylase activity releases the damaged DNA base from DNA by cleaving the N-glycosidic bond, leaving an AP site. The AP-lyase activity cleaves the phosphodiester bond 3' to the AP site by a beta-elimination. Primarily recognizes and repairs oxidative base damage of pyrimidines, but also purine-derived lesions, alkylation damage as well as abasic sites. Can also repair the oxidation products of 8-oxoguanine. This Saccharomyces cerevisiae (strain ATCC 204508 / S288c) (Baker's yeast) protein is Endonuclease III homolog 2 (NTG2).